Reading from the N-terminus, the 838-residue chain is Probable inorganic carbon transporter subunit DabA (838 aa).

4 residues coordinate Zn(2+): Cys-353, Asp-355, His-537, and Cys-552.

The protein belongs to the inorganic carbon transporter (TC 9.A.2) DabA family. Forms a complex with DabB. Zn(2+) serves as cofactor.

The protein localises to the cell membrane. Part of an energy-coupled inorganic carbon pump. This chain is Probable inorganic carbon transporter subunit DabA, found in Chloroflexus aurantiacus (strain ATCC 29366 / DSM 635 / J-10-fl).